The following is a 96-amino-acid chain: Protein Vpr (96 aa).

The homooligomerization stretch occupies residues 1-42; the sequence is MEQAPEDQGPQREPYNQWALELLEELKNEAVRHFPRIWLHGL. 3 positions are modified to phosphoserine; by host: S79, S94, and S96.

Belongs to the HIV-1 VPR protein family. In terms of assembly, homooligomer, may form homodimer. Interacts with p6-gag region of the Pr55 Gag precursor protein through a (Leu-X-X)4 motif near the C-terminus of the P6gag protein. Interacts with host UNG. May interact with host RAD23A/HHR23A. Interacts with host VPRBP/DCAF1, leading to hijack the CUL4A-RBX1-DDB1-DCAF1/VPRBP complex, mediating ubiquitination of host proteins such as TERT and ZGPAT and arrest of the cell cycle in G2 phase. Post-translationally, phosphorylated on several residues by host. These phosphorylations regulate VPR activity for the nuclear import of the HIV-1 pre-integration complex.

Its subcellular location is the virion. The protein localises to the host nucleus. The protein resides in the host extracellular space. In terms of biological role, during virus replication, may deplete host UNG protein, and incude G2-M cell cycle arrest. Acts by targeting specific host proteins for degradation by the 26S proteasome, through association with the cellular CUL4A-DDB1 E3 ligase complex by direct interaction with host VPRPB/DCAF-1. Cell cycle arrest reportedly occurs within hours of infection and is not blocked by antiviral agents, suggesting that it is initiated by the VPR carried into the virion. Additionally, VPR induces apoptosis in a cell cycle dependent manner suggesting that these two effects are mechanistically linked. Detected in the serum and cerebrospinal fluid of AIDS patient, VPR may also induce cell death to bystander cells. Its function is as follows. During virus entry, plays a role in the transport of the viral pre-integration (PIC) complex to the host nucleus. This function is crucial for viral infection of non-dividing macrophages. May act directly at the nuclear pore complex, by binding nucleoporins phenylalanine-glycine (FG)-repeat regions. This Human immunodeficiency virus type 1 group M subtype B (isolate MN) (HIV-1) protein is Protein Vpr.